We begin with the raw amino-acid sequence, 510 residues long: Abscisic acid 8'-hydroxylase 2 (510 aa).

A helical transmembrane segment spans residues 3 to 23 (FLLFFVFVTAAVLCFVVPAFL). Position 441 (cysteine 441) interacts with heme.

It belongs to the cytochrome P450 family. It depends on heme as a cofactor.

Its subcellular location is the membrane. It catalyses the reaction 2-cis-(+)-abscisate + reduced [NADPH--hemoprotein reductase] + O2 = (+)-8'-hydroxyabscisate + oxidized [NADPH--hemoprotein reductase] + H2O + H(+). It functions in the pathway plant hormone degradation; abscisic acid degradation. Involved in the oxidative degradation of abscisic acid. The polypeptide is Abscisic acid 8'-hydroxylase 2 (CYP707A6) (Oryza sativa subsp. japonica (Rice)).